The following is a 390-amino-acid chain: Adherens junction-associated protein 1 (390 aa).

Residues 1 to 37 (MWITQLLGIRSGPPLGSHAWILIAIFQLAMDFIICES) form the signal peptide. Residues 38-262 (ESPGKAYKHL…NDTSGLAVHQ (225 aa)) lie on the Extracellular side of the membrane. Residues 218-253 (LQNPGIHNGKKSPGRISTTDPNPGNGKTARPPRIPN) are disordered. A helical membrane pass occupies residues 263–283 (IITITVSLIMVIAALITTLVL). Positions 283–390 (LKNCCAQSGN…VSEKWFEISC (108 aa)) are targeting signals. The Cytoplasmic portion of the chain corresponds to 284-390 (KNCCAQSGNA…VSEKWFEISC (107 aa)).

The protein resides in the basolateral cell membrane. It is found in the apical cell membrane. The protein localises to the cell junction. It localises to the adherens junction. In terms of biological role, may play a role in cell adhesion and cell migration. In Xenopus tropicalis (Western clawed frog), this protein is Adherens junction-associated protein 1 (ajap1).